A 156-amino-acid polypeptide reads, in one-letter code: Small ribosomal subunit protein uS7A/uS7B (156 aa).

The protein belongs to the universal ribosomal protein uS7 family. Part of the 30S ribosomal subunit. Contacts proteins S9 and S11.

Its function is as follows. One of the primary rRNA binding proteins, it binds directly to 16S rRNA where it nucleates assembly of the head domain of the 30S subunit. Is located at the subunit interface close to the decoding center, probably blocks exit of the E-site tRNA. The chain is Small ribosomal subunit protein uS7A/uS7B from Bartonella bacilliformis (strain ATCC 35685 / KC583 / Herrer 020/F12,63).